The following is a 440-amino-acid chain: MRRALRELAARHGRVLAASWRQRHRRPAGWFDPVETEFLPSALSLQERPISPTARWLARILMALAAGALVWSVVGKTEIVVHAAGKVVPVGQSKIIAASETGRVARVLVADNSRVAAGDVLLRLDAGVTEAEERKWRVQAAQARQDEARSRAMIRALDTGRAPVLAELPADPGMMAAQSYLDSQYADYQAQLRSIEAAIATYRRELGLVTQIAHAHRGLRRDGDVSQQAYLEKEQARMTLEGRLRQSEAQRAALQTQTRRQAFETLVLARKLAAQAEQEIARTSAQRSRLVLTAPVDGVVQQLVALTEGTAVAATQPLMMVVPSGAGIQVQAQLDSKDIGFVRAGAPATVKVGAYDYTKYGTLEGKVLYVSPDTVVDDRQQHSYRVTIALAHPALEVDGKPRLLKEGMAVQADIRTGSRRLIEYLLSPVARHAGESLGER.

The Cytoplasmic segment spans residues 1–55 (MRRALRELAARHGRVLAASWRQRHRRPAGWFDPVETEFLPSALSLQERPISPTAR). A helical transmembrane segment spans residues 56 to 75 (WLARILMALAAGALVWSVVG). The Periplasmic portion of the chain corresponds to 76–440 (KTEIVVHAAG…RHAGESLGER (365 aa)).

It belongs to the membrane fusion protein (MFP) (TC 8.A.1) family.

It localises to the cell inner membrane. Its function is as follows. CyaD is necessary for transport of calmodulin-sensitive adenylate cyclase-hemolysin (cyclolysin). In Bordetella pertussis (strain ATCC 9797 / DSM 5571 / CCUG 30873 / LMG 14455 / NCTC 10739 / 18323), this protein is Protein CyaD (cyaD).